Here is a 275-residue protein sequence, read N- to C-terminus: NH(3)-dependent NAD(+) synthetase (275 aa).

An ATP-binding site is contributed by 50–57 (GISGGVDS). Residue D56 participates in Mg(2+) binding. R147 is a binding site for deamido-NAD(+). T167 contacts ATP. E172 serves as a coordination point for Mg(2+). 2 residues coordinate deamido-NAD(+): K180 and D187. 2 residues coordinate ATP: K196 and T218. 267–268 (HK) is a deamido-NAD(+) binding site.

It belongs to the NAD synthetase family. As to quaternary structure, homodimer.

The enzyme catalyses deamido-NAD(+) + NH4(+) + ATP = AMP + diphosphate + NAD(+) + H(+). Its pathway is cofactor biosynthesis; NAD(+) biosynthesis; NAD(+) from deamido-NAD(+) (ammonia route): step 1/1. Its function is as follows. Catalyzes the ATP-dependent amidation of deamido-NAD to form NAD. Uses ammonia as a nitrogen source. This Ectopseudomonas mendocina (strain ymp) (Pseudomonas mendocina) protein is NH(3)-dependent NAD(+) synthetase.